Consider the following 182-residue polypeptide: Large ribosomal subunit protein uL6 (182 aa).

Belongs to the universal ribosomal protein uL6 family. As to quaternary structure, part of the 50S ribosomal subunit.

In terms of biological role, this protein binds to the 23S rRNA, and is important in its secondary structure. It is located near the subunit interface in the base of the L7/L12 stalk, and near the tRNA binding site of the peptidyltransferase center. This is Large ribosomal subunit protein uL6 from Caldicellulosiruptor saccharolyticus (strain ATCC 43494 / DSM 8903 / Tp8T 6331).